The primary structure comprises 170 residues: Calcineurin subunit B type 2 (170 aa).

Residue Gly-2 is the site of N-myristoyl glycine attachment. EF-hand domains lie at 18-46 (DEIK…FMSL), 50-85 (RHNP…FSVK), 87-122 (DEEQ…MVGN), and 128-163 (QLQQ…LEIH). Asp-31, Asp-33, Ser-35, Ser-37, Glu-42, Asp-63, Asp-65, Asp-67, Glu-69, Glu-74, Asp-100, Asp-102, Asp-104, Tyr-106, and Glu-111 together coordinate Ca(2+). The tract at residues 131-136 (QLVDKT) is calcineurin A binding. Ca(2+)-binding residues include Asp-141, Asp-143, Asp-145, Lys-147, and Glu-152.

Belongs to the calcineurin regulatory subunit family. As to quaternary structure, forms a complex composed of a calmodulin-dependent catalytic subunit (also known as calcineurin A) and a regulatory Ca(2+)-binding subunit (also known as calcineurin B). There are three catalytic subunits, each encoded by a separate gene (PPP3CA, PPP3CB, and PPP3CC) and two regulatory subunits which are also encoded by separate genes (PPP3R1 and PPP3R2). Interacts with SPATA33 (via PQIIIT motif). In terms of tissue distribution, testis-specific.

Its subcellular location is the mitochondrion. Its function is as follows. Regulatory subunit of calcineurin, a calcium-dependent, calmodulin stimulated protein phosphatase. Confers calcium sensitivity. The sequence is that of Calcineurin subunit B type 2 (PPP3R2) from Homo sapiens (Human).